The sequence spans 223 residues: Histone H1.5 (223 aa).

A compositionally biased stretch (low complexity) spans M1–P14. Residues M1–G56 form a disordered region. An N-acetylserine modification is found at S2. S2 is subject to Phosphoserine. Position 17 is an N6-acetyllysine (K17). S18 bears the Phosphoserine mark. Positions A20 to A35 are enriched in basic residues. K27 carries the N6-methyllysine modification. Residue K34 is modified to N6-(beta-hydroxybutyryl)lysine; alternate. K34 is modified (N6-succinyllysine; alternate). T36 carries the post-translational modification Phosphothreonine. In terms of domain architecture, H15 spans T36–K109. N6-acetyllysine is present on K46. Residue K52 is modified to N6-(beta-hydroxybutyryl)lysine. A Citrulline modification is found at R54. At K64 the chain carries N6-(beta-hydroxybutyryl)lysine. N6-acetyllysine is present on K75. 3 positions are modified to N6-(beta-hydroxybutyryl)lysine: K85, K90, and K106. The segment at G91–K223 is disordered. The segment covering K119–K130 has biased composition (basic residues). A phosphothreonine mark is found at T135 and T152. Over residues K137–K158 the composition is skewed to basic residues. N6-acetyllysine is present on K165. A compositionally biased stretch (basic residues) spans K166 to A184. Residues S170 and S186 each carry the phosphoserine modification. A compositionally biased stretch (basic residues) spans K191–K223.

Belongs to the histone H1/H5 family. Interacts with MSX1. In terms of processing, H1 histones are progressively phosphorylated during the cell cycle, becoming maximally phosphorylated during late G2 phase and M phase, and being dephosphorylated sharply thereafter. Citrullination at Arg-54 (H1R54ci) by PADI4 takes place within the DNA-binding site of H1 and results in its displacement from chromatin and global chromatin decondensation, thereby promoting pluripotency and stem cell maintenance. Post-translationally, hydroxybutyrylation of histones is induced by starvation.

It is found in the nucleus. The protein resides in the chromosome. Its function is as follows. Histone H1 protein binds to linker DNA between nucleosomes forming the macromolecular structure known as the chromatin fiber. Histones H1 are necessary for the condensation of nucleosome chains into higher-order structured fibers. Also acts as a regulator of individual gene transcription through chromatin remodeling, nucleosome spacing and DNA methylation. This chain is Histone H1.5 (H1-5), found in Mus musculus (Mouse).